We begin with the raw amino-acid sequence, 363 residues long: Alanine racemase (363 aa).

The active-site Proton acceptor; specific for D-alanine is the lysine 34. Position 34 is an N6-(pyridoxal phosphate)lysine (lysine 34). Residue arginine 129 participates in substrate binding. The active-site Proton acceptor; specific for L-alanine is the tyrosine 256. Methionine 304 contributes to the substrate binding site.

Belongs to the alanine racemase family. Pyridoxal 5'-phosphate serves as cofactor.

The enzyme catalyses L-alanine = D-alanine. It functions in the pathway amino-acid biosynthesis; D-alanine biosynthesis; D-alanine from L-alanine: step 1/1. In terms of biological role, catalyzes the interconversion of L-alanine and D-alanine. May also act on other amino acids. The chain is Alanine racemase (alr) from Edwardsiella ictaluri (strain 93-146).